The chain runs to 222 residues: uncharacterized protein (222 aa).

A helical membrane pass occupies residues 7–26; the sequence is ICLVSLICISGIYFGYQYYQ. Positions 139–222 constitute an SPOR domain; it reads CRSNAGYKVQ…AYNKQSCVLK (84 aa).

Its subcellular location is the membrane. This is an uncharacterized protein from Rickettsia prowazekii (strain Madrid E).